We begin with the raw amino-acid sequence, 310 residues long: Glycine-rich RNA-binding protein RZ1C (310 aa).

In terms of domain architecture, RRM spans 7–85; it reads SRIFVGGLSP…RVISVNRAEP (79 aa). Ser-15 is subject to Phosphoserine. A disordered region spans residues 82 to 120; that stretch reads RAEPKLGRDDGESHGSRGGRDSGYSIAGKGSFGGGGGGG. Positions 83-101 are enriched in basic and acidic residues; sequence AEPKLGRDDGESHGSRGGR. The segment covering 111 to 120 has biased composition (gly residues); the sequence is GSFGGGGGGG. The segment at 128 to 143 adopts a CCHC-type zinc-finger fold; the sequence is CFKCGRVGHWARDCPS. A disordered region spans residues 224 to 310; it reads RFAGGDRYSR…YPSSSTFDRY (87 aa). Basic and acidic residues-rich tracts occupy residues 226 to 236 and 244 to 253; these read AGGDRYSRGSD and DKARSFERDI. The segment covering 261-273 has biased composition (gly residues); it reads RYGGGRAGGPIRG. Phosphoserine is present on Ser-295.

Expressed in roots, rosette and cauline leaves, stems, floral buds and flowers.

It localises to the nucleus. Binds RNA and DNA sequences non-specifically. May be involved in tolerance to cold stress. The protein is Glycine-rich RNA-binding protein RZ1C of Arabidopsis thaliana (Mouse-ear cress).